Consider the following 92-residue polypeptide: Small ribosomal subunit protein uS19 (92 aa).

Belongs to the universal ribosomal protein uS19 family.

Protein S19 forms a complex with S13 that binds strongly to the 16S ribosomal RNA. In Psychromonas ingrahamii (strain DSM 17664 / CCUG 51855 / 37), this protein is Small ribosomal subunit protein uS19.